Here is a 498-residue protein sequence, read N- to C-terminus: Glycerol kinase (498 aa).

Residue Thr12 participates in ADP binding. ATP contacts are provided by Thr12, Thr13, and Ser14. A sn-glycerol 3-phosphate-binding site is contributed by Thr12. Arg16 serves as a coordination point for ADP. Sn-glycerol 3-phosphate is bound by residues Arg82, Glu83, Tyr134, and Asp243. The glycerol site is built by Arg82, Glu83, Tyr134, Asp243, and Gln244. 2 residues coordinate ADP: Thr265 and Gly308. ATP-binding residues include Thr265, Gly308, Gln312, and Gly409. ADP contacts are provided by Gly409 and Asn413.

Belongs to the FGGY kinase family.

It catalyses the reaction glycerol + ATP = sn-glycerol 3-phosphate + ADP + H(+). The protein operates within polyol metabolism; glycerol degradation via glycerol kinase pathway; sn-glycerol 3-phosphate from glycerol: step 1/1. Its activity is regulated as follows. Inhibited by fructose 1,6-bisphosphate (FBP). Its function is as follows. Key enzyme in the regulation of glycerol uptake and metabolism. Catalyzes the phosphorylation of glycerol to yield sn-glycerol 3-phosphate. This Petrotoga mobilis (strain DSM 10674 / SJ95) protein is Glycerol kinase.